The primary structure comprises 147 residues: D(1B) dopamine receptor (147 aa).

Residues 1–12 (SILISFPVQLNW) traverse the membrane as a helical segment. The Extracellular portion of the chain corresponds to 13 to 55 (HRDQAGSWGGLDLTNNLANWTPWEEDVWEPDVRAENCDSSLNR). Residue asparagine 54 is glycosylated (N-linked (GlcNAc...) asparagine). A helical membrane pass occupies residues 56–78 (TYAISSSLVSFYIPVAIMIVTYT). The Cytoplasmic portion of the chain corresponds to 79 to 128 (RIYRIAQVQIRRISSLERAAEHAQSCRSSAACAPDTSLRASIKKETKVLK). The chain crosses the membrane as a helical span at residues 129–147 (TLSVIMGVFVCCWLPFFIL).

The protein belongs to the G-protein coupled receptor 1 family.

The protein localises to the cell membrane. Its function is as follows. Dopamine receptor whose activity is mediated by G proteins which activate adenylyl cyclase. In Macaca mulatta (Rhesus macaque), this protein is D(1B) dopamine receptor (DRD5).